We begin with the raw amino-acid sequence, 60 residues long: Large ribosomal subunit protein uL30 (60 aa).

This sequence belongs to the universal ribosomal protein uL30 family. Part of the 50S ribosomal subunit.

In Albidiferax ferrireducens (strain ATCC BAA-621 / DSM 15236 / T118) (Rhodoferax ferrireducens), this protein is Large ribosomal subunit protein uL30.